The chain runs to 301 residues: F-box protein At4g02733 (301 aa).

The region spanning 91 to 146 (NSISWFLPSELTVKVFSMVDTKSLMQASACCTMFNNCAMDPLCYFHIDLTKAFKHV) is the F-box domain.

The chain is F-box protein At4g02733 from Arabidopsis thaliana (Mouse-ear cress).